The chain runs to 222 residues: Chorionic somatomammotropin hormone-like 1 (222 aa).

A signal peptide spans 1 to 26; it reads MAAGSRTSLLLAFALLCLPWLQEAGA. The Zn(2+) site is built by His44 and Glu205. Cysteines 213 and 220 form a disulfide.

This sequence belongs to the somatotropin/prolactin family.

The protein resides in the secreted. In terms of biological role, may be a novel gestational hormone required to compensate for absence of other members of the GH/CS cluster during gestation. The polypeptide is Chorionic somatomammotropin hormone-like 1 (CSHL1) (Homo sapiens (Human)).